The sequence spans 360 residues: Dual-specificity RNA methyltransferase RlmN (360 aa).

The Proton acceptor role is filled by glutamate 91. In terms of domain architecture, Radical SAM core spans arginine 110 to aspartate 343. Cysteine 117 and cysteine 348 are joined by a disulfide. [4Fe-4S] cluster is bound by residues cysteine 124, cysteine 128, and cysteine 131. S-adenosyl-L-methionine is bound by residues glycine 174–glutamate 175, serine 206, serine 229–histidine 231, and asparagine 305. Cysteine 348 serves as the catalytic S-methylcysteine intermediate.

It belongs to the radical SAM superfamily. RlmN family. It depends on [4Fe-4S] cluster as a cofactor.

The protein resides in the cytoplasm. It carries out the reaction adenosine(2503) in 23S rRNA + 2 reduced [2Fe-2S]-[ferredoxin] + 2 S-adenosyl-L-methionine = 2-methyladenosine(2503) in 23S rRNA + 5'-deoxyadenosine + L-methionine + 2 oxidized [2Fe-2S]-[ferredoxin] + S-adenosyl-L-homocysteine. It catalyses the reaction adenosine(37) in tRNA + 2 reduced [2Fe-2S]-[ferredoxin] + 2 S-adenosyl-L-methionine = 2-methyladenosine(37) in tRNA + 5'-deoxyadenosine + L-methionine + 2 oxidized [2Fe-2S]-[ferredoxin] + S-adenosyl-L-homocysteine. Its function is as follows. Specifically methylates position 2 of adenine 2503 in 23S rRNA and position 2 of adenine 37 in tRNAs. m2A2503 modification seems to play a crucial role in the proofreading step occurring at the peptidyl transferase center and thus would serve to optimize ribosomal fidelity. The chain is Dual-specificity RNA methyltransferase RlmN from Aliarcobacter butzleri (strain RM4018) (Arcobacter butzleri).